An 81-amino-acid polypeptide reads, in one-letter code: Cytochrome b559 subunit alpha (81 aa).

Residues 21–35 (VIHALTIPALFLAGW) form a helical membrane-spanning segment. Heme is bound at residue His23.

Belongs to the PsbE/PsbF family. In terms of assembly, heterodimer of an alpha subunit and a beta subunit. PSII is composed of 1 copy each of membrane proteins PsbA, PsbB, PsbC, PsbD, PsbE, PsbF, PsbH, PsbI, PsbJ, PsbK, PsbL, PsbM, PsbT, PsbX, PsbY, PsbZ, Psb30/Ycf12, peripheral proteins PsbO, CyanoQ (PsbQ), PsbU, PsbV and a large number of cofactors. It forms dimeric complexes. It depends on heme b as a cofactor.

It is found in the cellular thylakoid membrane. This b-type cytochrome is tightly associated with the reaction center of photosystem II (PSII). PSII is a light-driven water:plastoquinone oxidoreductase that uses light energy to abstract electrons from H(2)O, generating O(2) and a proton gradient subsequently used for ATP formation. It consists of a core antenna complex that captures photons, and an electron transfer chain that converts photonic excitation into a charge separation. This Synechococcus sp. (strain JA-2-3B'a(2-13)) (Cyanobacteria bacterium Yellowstone B-Prime) protein is Cytochrome b559 subunit alpha.